A 494-amino-acid chain; its full sequence is Tripartite motif-containing protein 5 (494 aa).

Ala-2 carries the post-translational modification N-acetylalanine. An RING-type zinc finger spans residues 15–59 (CPICLELLTEPLSLDCGHSFCQACITANHKESTLHQGERSCPLCR). Ser-86 is subject to Phosphoserine. The B box-type zinc finger occupies 91-132 (QKVDHCARHGEKLLLFCQQDGNVICWLCERSQEHRGHHTFLV). Zn(2+) is bound by residues Cys-96, His-99, Cys-118, and His-124. Positions 132-223 (VEEVAEKYQG…RLVQSESDMV (92 aa)) form a coiled coil. The interval 186–199 (FKQLRDILDCEESK) is required for interaction with GABARAP and for autophagy. A B30.2/SPRY domain is found at 280 to 494 (PDLKGMLQAF…LPMTLCSPSS (215 aa)).

The protein belongs to the TRIM/RBCC family. In terms of assembly, can form homodimers and homotrimers. In addition to lower-order dimerization, also exhibits a higher-order multimerization and both low- and high-order multimerizations are essential for its restriction activity. Interacts with BTBD1 and BTBD2. Interacts with PSMC4, PSMC5, PSMD7 and HSPA8/HSC70. Interacts (via B30.2/SPRY domain) with HSPA1A/B. Interacts with PSMC2, MAP3K7/TAK1, TAB2 and TAB3. Interacts with SQSTM1. Interacts with TRIM6 and TRIM34. Interacts with ULK1 (phosphorylated form), GABARAP, GABARAPL1, GABARAPL2, MAP1LC3A, MAP1LC3C and BECN1. Post-translationally, degraded in a proteasome-independent fashion in the absence of viral infection but in a proteasome-dependent fashion following exposure to restriction sensitive virus. In terms of processing, autoubiquitinated in a RING finger- and UBE2D2-dependent manner. Monoubiquitinated by TRIM21. Deubiquitinated by Yersinia YopJ. Ubiquitination may not lead to proteasomal degradation.

It localises to the cytoplasm. Its subcellular location is the nucleus. It catalyses the reaction S-ubiquitinyl-[E2 ubiquitin-conjugating enzyme]-L-cysteine + [acceptor protein]-L-lysine = [E2 ubiquitin-conjugating enzyme]-L-cysteine + N(6)-ubiquitinyl-[acceptor protein]-L-lysine.. It participates in protein modification; protein ubiquitination. Functionally, capsid-specific restriction factor that prevents infection from non-host-adapted retroviruses. Blocks viral replication early in the life cycle, after viral entry but before reverse transcription. In addition to acting as a capsid-specific restriction factor, also acts as a pattern recognition receptor that activates innate immune signaling in response to the retroviral capsid lattice. Binding to the viral capsid triggers its E3 ubiquitin ligase activity, and in concert with the heterodimeric ubiquitin conjugating enzyme complex UBE2V1-UBE2N (also known as UBC13-UEV1A complex) generates 'Lys-63'-linked polyubiquitin chains, which in turn are catalysts in the autophosphorylation of the MAP3K7/TAK1 complex (includes TAK1, TAB2, and TAB3). Activation of the MAP3K7/TAK1 complex by autophosphorylation results in the induction and expression of NF-kappa-B and MAPK-responsive inflammatory genes, thereby leading to an innate immune response in the infected cell. Plays a role in regulating autophagy through activation of autophagy regulator BECN1 by causing its dissociation from its inhibitors BCL2 and TAB2. The protein is Tripartite motif-containing protein 5 (TRIM5) of Cebuella pygmaea (Pygmy marmoset).